The chain runs to 467 residues: Glutamyl-tRNA reductase (467 aa).

Substrate-binding positions include Thr49–Arg52, Ser109, Glu114–Gln116, and Gln120. Residue Cys50 is the Nucleophile of the active site. Residue Gly189–Gly194 participates in NADP(+) binding. The tract at residues Gly446 to Glu467 is disordered. The span at Phe447 to Glu467 shows a compositional bias: polar residues.

Belongs to the glutamyl-tRNA reductase family. In terms of assembly, homodimer.

The enzyme catalyses (S)-4-amino-5-oxopentanoate + tRNA(Glu) + NADP(+) = L-glutamyl-tRNA(Glu) + NADPH + H(+). The protein operates within porphyrin-containing compound metabolism; protoporphyrin-IX biosynthesis; 5-aminolevulinate from L-glutamyl-tRNA(Glu): step 1/2. Catalyzes the NADPH-dependent reduction of glutamyl-tRNA(Glu) to glutamate 1-semialdehyde (GSA). In Mycobacterium leprae (strain TN), this protein is Glutamyl-tRNA reductase.